The chain runs to 2060 residues: Unconventional myosin-X (2060 aa).

Residue M1 is modified to N-acetylmethionine. The region spanning 63–739 (EGVDDMASLT…LEQKLEKRRE (677 aa)) is the Myosin motor domain. ATP-binding positions include N104, Y113, 160-165 (GAGKTE), and N215. Residues 619–641 (LHSLMATLSSSNPFFVRCIKPNT) are actin-binding. IQ domains follow at residues 742 to 771 (IDRAAMVIRAHILGYLARKQYRKVLCGVVT), 765 to 794 (VLCGVVTIQKNYRAFLARKRFLHLKKAAIV), and 788 to 817 (LKKAAIVFQKQLRGRLARKVYRQLLAEKRE). The SAH stretch occupies residues 814–882 (EKRELEERKR…LTRELEKQRE (69 aa)). Positions 883–933 (NKQVEEILRLEKEIEDLQRMKEQQELSLTEASLQKLQQLRDEELRRLEDEA) form a coiled coil. S961, S964, and S967 each carry phosphoserine. 2 disordered regions span residues 971 to 1039 (SELA…PYMN) and 1064 to 1088 (SLHNSSSGESTYCMPQNNGDLPSPD). A compositionally biased stretch (acidic residues) spans 991 to 1005 (PEEEVDEGFEADDDA). Residues 1064–1083 (SLHNSSSGESTYCMPQNNGD) are compositionally biased toward polar residues. T1160 is subject to Phosphothreonine. PH domains follow at residues 1214–1312 (EALK…QVHS) and 1394–1499 (EFIV…NVTD). The MyTH4 domain maps to 1549-1697 (LPYGDINLNL…PSRDEIEALI (149 aa)). Residues 1702–2046 (MTSTVYCHGG…AYISMIVKKR (345 aa)) form the FERM domain.

This sequence belongs to the TRAFAC class myosin-kinesin ATPase superfamily. Myosin family. In terms of assembly, monomer, when in an inactive conformation in the cytosol. Homodimer in its active, membrane-bound conformation; antiparallel coiled coil-mediated dimer formation. Interacts with ECPAS. Interacts with DCC and ITGB5; the presence of DCC inhibits ITGB5 binding. Interacts with tubulin; ITGB5 or DCC binding inhibits tubulin binding. Interacts strongly with CALM3 and weakly with CALM, the CALM3 interaction is essential for function in filopodial extension and motility. Interacts with ITGB1, ITGB3 and ITGB5. Interacts with NEO1. Interacts with VASP.

It is found in the cytoplasm. The protein resides in the cytosol. The protein localises to the cell projection. It localises to the lamellipodium. Its subcellular location is the ruffle. It is found in the cytoskeleton. The protein resides in the filopodium tip. The protein localises to the cell cortex. It localises to the filopodium membrane. Its subcellular location is the cell membrane. Myosins are actin-based motor molecules with ATPase activity. Unconventional myosins serve in intracellular movements. MYO10 binds to actin filaments and actin bundles and functions as a plus end-directed motor. Moves with higher velocity and takes larger steps on actin bundles than on single actin filaments. The tail domain binds to membranous compartments containing phosphatidylinositol 3,4,5-trisphosphate or integrins, and mediates cargo transport along actin filaments. Regulates cell shape, cell spreading and cell adhesion. Stimulates the formation and elongation of filopodia. In hippocampal neurons it induces the formation of dendritic filopodia by trafficking the actin-remodeling protein VASP to the tips of filopodia, where it promotes actin elongation. Plays a role in formation of the podosome belt in osteoclasts. The protein is Unconventional myosin-X (Myo10) of Rattus norvegicus (Rat).